Here is a 65-residue protein sequence, read N- to C-terminus: UPF0434 protein BH12860 (65 aa).

Belongs to the UPF0434 family.

This is UPF0434 protein BH12860 from Bartonella henselae (strain ATCC 49882 / DSM 28221 / CCUG 30454 / Houston 1) (Rochalimaea henselae).